A 202-amino-acid polypeptide reads, in one-letter code: PXMP2/4 family protein 1 (202 aa).

The next 4 membrane-spanning stretches (helical) occupy residues 21-41 (PVIT…TLAQ), 54-72 (LMMC…HFWF), 138-154 (KAWM…FRFV), and 161-177 (LISN…LSTV).

It belongs to the peroxisomal membrane protein PXMP2/4 family.

The protein localises to the membrane. The polypeptide is PXMP2/4 family protein 1 (Dictyostelium discoideum (Social amoeba)).